Consider the following 130-residue polypeptide: Small ribosomal subunit protein uS8 (130 aa).

This sequence belongs to the universal ribosomal protein uS8 family. In terms of assembly, part of the 30S ribosomal subunit. Contacts proteins S5 and S12.

One of the primary rRNA binding proteins, it binds directly to 16S rRNA central domain where it helps coordinate assembly of the platform of the 30S subunit. The protein is Small ribosomal subunit protein uS8 of Histophilus somni (strain 129Pt) (Haemophilus somnus).